We begin with the raw amino-acid sequence, 167 residues long: NAD(P)H-quinone oxidoreductase subunit J (167 aa).

This sequence belongs to the complex I 30 kDa subunit family. NDH-1 can be composed of about 15 different subunits; different subcomplexes with different compositions have been identified which probably have different functions.

The protein resides in the cellular thylakoid membrane. It carries out the reaction a plastoquinone + NADH + (n+1) H(+)(in) = a plastoquinol + NAD(+) + n H(+)(out). It catalyses the reaction a plastoquinone + NADPH + (n+1) H(+)(in) = a plastoquinol + NADP(+) + n H(+)(out). In terms of biological role, NDH-1 shuttles electrons from an unknown electron donor, via FMN and iron-sulfur (Fe-S) centers, to quinones in the respiratory and/or the photosynthetic chain. The immediate electron acceptor for the enzyme in this species is believed to be plastoquinone. Couples the redox reaction to proton translocation, and thus conserves the redox energy in a proton gradient. Cyanobacterial NDH-1 also plays a role in inorganic carbon-concentration. The sequence is that of NAD(P)H-quinone oxidoreductase subunit J from Microcystis aeruginosa (strain NIES-843 / IAM M-2473).